The chain runs to 334 residues: Ribosomal RNA small subunit methyltransferase H (334 aa).

A disordered region spans residues 1 to 21 (MNALPIRTAAPSGHSGGHSST). Residues 52–54 (GGY), aspartate 71, phenylalanine 98, aspartate 119, and glutamine 126 each bind S-adenosyl-L-methionine.

Belongs to the methyltransferase superfamily. RsmH family.

Its subcellular location is the cytoplasm. The enzyme catalyses cytidine(1402) in 16S rRNA + S-adenosyl-L-methionine = N(4)-methylcytidine(1402) in 16S rRNA + S-adenosyl-L-homocysteine + H(+). In terms of biological role, specifically methylates the N4 position of cytidine in position 1402 (C1402) of 16S rRNA. This Granulibacter bethesdensis (strain ATCC BAA-1260 / CGDNIH1) protein is Ribosomal RNA small subunit methyltransferase H.